The chain runs to 113 residues: Large ribosomal subunit protein bL17 (113 aa).

This sequence belongs to the bacterial ribosomal protein bL17 family. As to quaternary structure, part of the 50S ribosomal subunit. Contacts protein L32.

The chain is Large ribosomal subunit protein bL17 from Clostridium botulinum (strain ATCC 19397 / Type A).